A 463-amino-acid chain; its full sequence is L-seryl-tRNA(Sec) selenium transferase (463 aa).

Position 295 is an N6-(pyridoxal phosphate)lysine (Lys295).

It belongs to the SelA family. In terms of assembly, homodecamer; pentamer of dimers. Binds only one seryl-tRNA(Sec) per dimer. Requires pyridoxal 5'-phosphate as cofactor.

The protein resides in the cytoplasm. It carries out the reaction L-seryl-tRNA(Sec) + selenophosphate + H(+) = L-selenocysteinyl-tRNA(Sec) + phosphate. It participates in aminoacyl-tRNA biosynthesis; selenocysteinyl-tRNA(Sec) biosynthesis; selenocysteinyl-tRNA(Sec) from L-seryl-tRNA(Sec) (bacterial route): step 1/1. Its function is as follows. Converts seryl-tRNA(Sec) to selenocysteinyl-tRNA(Sec) required for selenoprotein biosynthesis. The polypeptide is L-seryl-tRNA(Sec) selenium transferase (Photorhabdus laumondii subsp. laumondii (strain DSM 15139 / CIP 105565 / TT01) (Photorhabdus luminescens subsp. laumondii)).